Here is a 575-residue protein sequence, read N- to C-terminus: Cyclic nucleotide-gated channel alpha-4 (575 aa).

Residues 1–38 (MSQDGKVKTTESTPPAPTKARKWLPVLDPSGDYYYWWL) are Cytoplasmic-facing. Residues 39 to 60 (NTMVFPIMYNLIIVVCRACFPD) form a helical membrane-spanning segment. Residues 61–70 (LQHSYLVAWF) are Extracellular-facing. Residues 71 to 91 (VLDYTSDLLYLLDIGVRFHTG) traverse the membrane as a helical segment. Residues 92–116 (FLEQGILVVDKGMIASRYVRTWSFL) are Cytoplasmic-facing. The helical transmembrane segment at 117–135 (LDLASLVPTDAAYVQLGPH) threads the bilayer. At 136–140 (IPTLR) the chain is on the extracellular side. Residues 141–159 (LNRFLRVPRLFEAFDRTET) traverse the membrane as a helical segment. Topologically, residues 160-166 (RTAYPNA) are cytoplasmic. The tract at residues 164-272 (PNAFRIAKLM…GSMSSVIYNM (109 aa)) is ion conduction pathway. Residues 167-190 (FRIAKLMLYIFVVIHWNSCLYFAL) traverse the membrane as a helical segment. Over 191 to 213 (SRYLGFGRDAWVYPDPAQPGFER) the chain is Extracellular. 2 helical membrane-spanning segments follow: residues 214-248 (LRRQYLYSFYFSTLILTTVGDTPLPDREEEYLFMV) and 249-273 (GDFLLAVMGFATIMGSMSSVIYNMN). Residues 231-234 (TVGD) form a selectivity filter region. The segment at 274 to 350 (TADAAFYPDH…STLSRVQIFQ (77 aa)) is C-linker. Residues 274 to 575 (TADAAFYPDH…AGQAGPSGIE (302 aa)) lie on the Cytoplasmic side of the membrane. Residues 292 to 302 (LQHVNKRLERR) carry the IQ-type motif. 348–471 (IFQNCEASLL…AVMEEKGREI (124 aa)) is an a nucleoside 3',5'-cyclic phosphate binding site. Residues 354-474 (ASLLEELVLK…EEKGREILLK (121 aa)) form a cyclic nucleotide-binding domain region. Positions 414, 417, 430, and 431 each coordinate 3',5'-cyclic GMP. 2 residues coordinate 3',5'-cyclic AMP: R430 and T431. Residues 493–547 (TESRLKGLDQQLDDLQTKFARLLAELESSALKIAYRIERLEWQTREWPMPEDMGE) are a coiled coil. The disordered stretch occupies residues 537–575 (REWPMPEDMGEADDEAEPGEGTSKDGEGKAGQAGPSGIE). Over residues 544 to 554 (DMGEADDEAEP) the composition is skewed to acidic residues.

The protein belongs to the cyclic nucleotide-gated cation channel (TC 1.A.1.5) family. CNGA4 subfamily. In terms of assembly, the olfactory cyclic nucleotide-gated channel is an heterotetramer composed of CNGA2, CNGA4 and CNGB1b subunits with 2:1:1 stoichiometry. May form homomeric channels gated by nitric oxide. Post-translationally, N-glycosylated. Olfactory neurons. Expressed in olfactory sensory cilia (at protein level).

It is found in the cell projection. It localises to the cilium membrane. It carries out the reaction Ca(2+)(in) = Ca(2+)(out). The enzyme catalyses Na(+)(in) = Na(+)(out). The catalysed reaction is K(+)(in) = K(+)(out). It catalyses the reaction NH4(+)(in) = NH4(+)(out). It carries out the reaction Rb(+)(in) = Rb(+)(out). The enzyme catalyses Li(+)(in) = Li(+)(out). The catalysed reaction is Cs(+)(in) = Cs(+)(out). With respect to regulation, ca(2+)-calmodulin exerts its inhibitory effect in cAMP sensitivity by binding to IQ-like motif of CNGA4 and preferably binds to the channel in the closed state. Inhibition by PIP3 of the CNG channel probably occurs via CGNA2 binding. Ca(2+) currents are inhibited by pimozide, an L-type Ca(2+) channel blocker. Pore-forming subunit of the olfactory cyclic nucleotide-gated channel. Operates in the cilia of olfactory sensory neurons where chemical stimulation of the odorant is converted to an electrical signal. Mediates odorant-induced cAMP-dependent Ca(2+) influx triggering neuron depolarization. The rise of intracellular Ca(2+) levels potentiates the olfactory response by activating Ca(2+)-dependent Cl(-) channels, but it also serves as a negative feedback signal to desensitize the channel for rapid adaptation to odorants. Conducts cAMP- and cGMP-gated ion currents, with permeability for monovalent and divalent cations. May conduct nitric oxide-gated Ca(2+) currents relevant to neurons of vomeronasal organ, a system involved in the perception of pheromones. The protein is Cyclic nucleotide-gated channel alpha-4 of Rattus norvegicus (Rat).